A 176-amino-acid chain; its full sequence is Transcription factor E (176 aa).

The HTH TFE/IIEalpha-type domain maps to 8–90 (NDPVIQKYLH…LWTFHYENIP (83 aa)).

This sequence belongs to the TFE family. In terms of assembly, monomer. Interaction with RNA polymerase subunits RpoF and RpoE is necessary for Tfe stimulatory transcription activity. Able to interact with Tbp and RNA polymerase in the absence of DNA promoter. Interacts both with the preinitiation and elongation complexes.

In terms of biological role, transcription factor that plays a role in the activation of archaeal genes transcribed by RNA polymerase. Facilitates transcription initiation by enhancing TATA-box recognition by TATA-box-binding protein (Tbp), and transcription factor B (Tfb) and RNA polymerase recruitment. Not absolutely required for transcription in vitro, but particularly important in cases where Tbp or Tfb function is not optimal. It dynamically alters the nucleic acid-binding properties of RNA polymerases by stabilizing the initiation complex and destabilizing elongation complexes. Seems to translocate with the RNA polymerase following initiation and acts by binding to the non template strand of the transcription bubble in elongation complexes. The chain is Transcription factor E from Haloquadratum walsbyi (strain DSM 16790 / HBSQ001).